An 876-amino-acid chain; its full sequence is AP-5 complex subunit beta-1 (876 aa).

As to quaternary structure, probably part of the adaptor protein complex 5 (AP-5), a tetramer composed of AP5B1, AP5M1, AP5S1 and AP5Z1. Interacts with ZFYVE26 and SPG11.

Its function is as follows. As part of AP-5, a probable fifth adaptor protein complex, it may be involved in endosomal transport. The chain is AP-5 complex subunit beta-1 (Ap5b1) from Rattus norvegicus (Rat).